A 334-amino-acid polypeptide reads, in one-letter code: WD repeat-containing protein 54 (334 aa).

3 WD repeats span residues 116–155, 162–206, and 250–289; these read SSVQAMFARGIAASVHFICVGTCSGRVLVFDIPAKGPNIV, GHQT…TLLT, and AHARTISALDLAPEVGKLLSAAEDTFVHIWKLNRNPESGS.

In terms of assembly, homodimer and homotrimer; forms tight forms of dimers and trimers. Interacts with IZUMO1 and IZUMO1R/JUNO. Post-translationally, cross-linked to tightly form both dimers and trimers by TGM2. Cross-linking enhances the activation of EGF receptor-mediated signaling pathway. Cross-linking is inhibited by EGF. Ubiquitinated. EGF increases ubiquitination.

It localises to the vesicle. The protein localises to the cytoplasm. The protein resides in the cell membrane. Functionally, plays a role in the adhesion and fusion of the sperm-oocyte membrane through its interactions with IZUMO1 and IZUMO1R/JUNO. When cross-linked to form dimers and trimers, it has a regulatory effect on ERK signaling pathway activity in response to EGF stimulation. Colocalizes with the EGF receptor in WDR54-specific vesicle where it sustains the internalization and controls the degradation of the EGF receptor after EGF stimulation. The sequence is that of WD repeat-containing protein 54 from Mus musculus (Mouse).